Reading from the N-terminus, the 370-residue chain is MLSKRLLNFESFEVMDILALAQKLESEGKKVIHLEIGEPDFNTPKPIVDEGIKSLKEGKTHYTDSRGILELREKISELYKDKYKADIIPDNIIITGGSSLGLFFALSSIIDDGDEVLIQNPCYPCYKNFIRFLGAKPVFCDFTVESLEEALSDKTKAIIINSPSNPLGEVIDREIYEFAYENIPYIISDEIYNGLVYEGKCYSAIEFDENLEKTILINGFSKLYAMTGWRIGYVISNDEIIEAILKLQQNLFISAPTISQYAALKAFEKETEREINSMIKEFDRRRRLVLKYVKDFGWEVNNPIGAYYVFPNIGEDGREFAYKLLKEKFVALTPGIGFGSKGKNYIRISYANSYENIKEGLERIKEFLNK.

An N6-(pyridoxal phosphate)lysine modification is found at Lys222.

It belongs to the class-I pyridoxal-phosphate-dependent aminotransferase family. As to quaternary structure, homodimer. It depends on pyridoxal 5'-phosphate as a cofactor.

The protein resides in the cytoplasm. It catalyses the reaction 4-(hydroxymethyl)-2-furancarboxaldehyde phosphate + L-alanine = [5-(aminomethyl)-3-furyl]methyl phosphate + pyruvate. It participates in cofactor biosynthesis; methanofuran biosynthesis. In terms of biological role, catalyzes the transamination reaction between 4-(hydroxymethyl)-2-furancarboxaldehyde phosphate (4-HFC-P) and alanine to produce pyruvate and 5-(aminomethyl)-3-furanmethanol phosphate (F1-P), the precursor for the furan moiety in methanofuran. This Methanocaldococcus jannaschii (strain ATCC 43067 / DSM 2661 / JAL-1 / JCM 10045 / NBRC 100440) (Methanococcus jannaschii) protein is (5-formylfuran-3-yl)methyl phosphate transaminase.